A 1026-amino-acid chain; its full sequence is RecBCD enzyme subunit RecB (1026 aa).

The UvrD-like helicase ATP-binding domain maps to 1–438 (MSSFDIFSPT…LILDTNYRST (438 aa)). Residues 1–766 (MSSFDIFSPT…LANYANVTKH (766 aa)) form a DNA-binding and helicase activity, interacts with RecC region. Position 21 to 28 (21 to 28 (ASAGTGKT)) interacts with ATP. Residues 815–1026 (SRTIHSFSST…KGNGFLQPGR (212 aa)) are nuclease activity, interacts with RecD and RecA. 3 residues coordinate Mg(2+): H854, D940, and D953. D953 acts as the For nuclease activity in catalysis.

The protein belongs to the helicase family. UvrD subfamily. In terms of assembly, heterotrimer of RecB, RecC and RecD. All subunits contribute to DNA-binding. Interacts with RecA. It depends on Mg(2+) as a cofactor.

It carries out the reaction Exonucleolytic cleavage (in the presence of ATP) in either 5'- to 3'- or 3'- to 5'-direction to yield 5'-phosphooligonucleotides.. The catalysed reaction is Couples ATP hydrolysis with the unwinding of duplex DNA by translocating in the 3'-5' direction.. It catalyses the reaction ATP + H2O = ADP + phosphate + H(+). Its function is as follows. A helicase/nuclease that prepares dsDNA breaks (DSB) for recombinational DNA repair. Binds to DSBs and unwinds DNA via a highly rapid and processive ATP-dependent bidirectional helicase activity. Unwinds dsDNA until it encounters a Chi (crossover hotspot instigator) sequence from the 3' direction. Cuts ssDNA a few nucleotides 3' to the Chi site. The properties and activities of the enzyme are changed at Chi. The Chi-altered holoenzyme produces a long 3'-ssDNA overhang and facilitates RecA-binding to the ssDNA for homologous DNA recombination and repair. Holoenzyme degrades any linearized DNA that is unable to undergo homologous recombination. In the holoenzyme this subunit contributes ATPase, 3'-5' helicase, exonuclease activity and loads RecA onto ssDNA. The polypeptide is RecBCD enzyme subunit RecB (Chlamydia trachomatis serovar D (strain ATCC VR-885 / DSM 19411 / UW-3/Cx)).